Here is a 321-residue protein sequence, read N- to C-terminus: tRNA-dihydrouridine synthase B (321 aa).

Residues 16–18 and glutamine 70 contribute to the FMN site; that span reads PMA. The active-site Proton donor is the cysteine 100. FMN is bound by residues lysine 139, 200–202, and 224–225; these read NGD and GR.

The protein belongs to the Dus family. DusB subfamily. It depends on FMN as a cofactor.

It carries out the reaction a 5,6-dihydrouridine in tRNA + NAD(+) = a uridine in tRNA + NADH + H(+). It catalyses the reaction a 5,6-dihydrouridine in tRNA + NADP(+) = a uridine in tRNA + NADPH + H(+). Catalyzes the synthesis of 5,6-dihydrouridine (D), a modified base found in the D-loop of most tRNAs, via the reduction of the C5-C6 double bond in target uridines. In Escherichia coli O157:H7, this protein is tRNA-dihydrouridine synthase B.